Here is a 68-residue protein sequence, read N- to C-terminus: Large ribosomal subunit protein uL29 (68 aa).

Belongs to the universal ribosomal protein uL29 family.

The sequence is that of Large ribosomal subunit protein uL29 from Chloroflexus aggregans (strain MD-66 / DSM 9485).